The sequence spans 716 residues: Putative mannosyltransferase YkcB (716 aa).

A run of 8 helical transmembrane segments spans residues 8 to 28, 44 to 64, 87 to 107, 118 to 135, 137 to 157, 159 to 179, 180 to 200, and 206 to 226; these read LDIVLLLILLASAFLNIYNIW, MMQSFHNFFYASFDAAGFITV, SVILPQALAGVGSVLLMYLLI, IASFVMACTPIAVAVART, NVDALLVFFLLLATWLLFKAI, KGKLIWLLAAFFVVGVGFNTK, MLQAYMILPAFLLFYLIAANA, and IVSLVSALAVLAAVSLSWPLI. Residues 260–363 are disordered; it reads TGQNSGGGQG…GSGMFGTGTP (104 aa). Residues 278-289 show a composition bias toward polar residues; sequence EMSSSDNTQAPP. The segment covering 290-307 has biased composition (low complexity); sequence NQSSSNSSSSDGKSSNGN. Residues 318–347 show a composition bias toward gly residues; that stretch reads PSGGQGGPPSGGDGGQGGPGGDGGKGGTGT. Helical transmembrane passes span 376–396, 409–429, 433–453, 462–482, 491–511, and 518–538; these read QISWLLPFAIFGIAGLLIAGA, TVFWVAWLVPIAGFFSVAEFF, YLIMLAPPIAALVGAGWVALV, WKAWLLPGAIIATTGFELFIL, VGWSIGVGVIGVLSAIALLLF, and FSYYVSLAALLALLVMPMYWA. Residues 664–716 are disordered; sequence VASEKWQSSSDQKTENTDSADTSSSKASGENGKMGGPGGMNQSATLYELHADE. Residues 680–694 are compositionally biased toward low complexity; the sequence is TDSADTSSSKASGEN.

The protein belongs to the glycosyltransferase 39 family.

The protein localises to the cell membrane. The protein is Putative mannosyltransferase YkcB (ykcB) of Bacillus subtilis (strain 168).